The sequence spans 176 residues: Translation initiation factor IF-3 (176 aa).

Belongs to the IF-3 family. As to quaternary structure, monomer.

Its subcellular location is the cytoplasm. Its function is as follows. IF-3 binds to the 30S ribosomal subunit and shifts the equilibrium between 70S ribosomes and their 50S and 30S subunits in favor of the free subunits, thus enhancing the availability of 30S subunits on which protein synthesis initiation begins. The protein is Translation initiation factor IF-3 of Streptococcus uberis (strain ATCC BAA-854 / 0140J).